Reading from the N-terminus, the 107-residue chain is Putative regulatory protein BCG9842_A0044 (107 aa).

Belongs to the RemA family.

The protein is Putative regulatory protein BCG9842_A0044 of Bacillus cereus (strain G9842).